The chain runs to 245 residues: Probable phosphatase YcdX (245 aa).

Positions 7, 9, 15, 40, 73, 101, 131, 192, and 194 each coordinate Zn(2+).

Belongs to the PHP family. In terms of assembly, homotrimer. Zn(2+) is required as a cofactor.

The chain is Probable phosphatase YcdX from Escherichia coli (strain K12 / MC4100 / BW2952).